The chain runs to 394 residues: Venom metalloproteinase antarease-like TtrivMP_A (394 aa).

The signal sequence occupies residues 1 to 16 (MISYLASIFLLATVSA). Positions 17–158 (VPSGRVEVVF…AENVSRMAEE (142 aa)) are excised as a propeptide. Asn-151 carries an N-linked (GlcNAc...) asparagine glycan. Residues 162–390 (IVVEYYIVTD…KPTAFCIFEQ (229 aa)) form the Peptidase M12B domain. Cys-295 and Cys-386 are oxidised to a cystine. His-319 contacts Zn(2+). Glu-320 is an active-site residue. 2 residues coordinate Zn(2+): His-323 and His-329.

Belongs to the venom metalloproteinase (M12B) family. Zn(2+) is required as a cofactor. As to expression, expressed by the venom gland.

It is found in the secreted. Inhibited by EDTA. Acts as a metalloprotease. Penetrates intact tissue and specifically cleaves the vesicle-associated membrane protein 2 (VAMP2) (part of the SNARE complex) involved in pancreatic secretion, thus disrupting the normal vesicular traffic. In Tityus trivittatus (Argentinean scorpion), this protein is Venom metalloproteinase antarease-like TtrivMP_A.